A 27-amino-acid polypeptide reads, in one-letter code: Cupiennin-3a (27 aa).

Glu-27 carries the glutamic acid 1-amide modification.

In terms of tissue distribution, expressed by the venom gland.

It is found in the secreted. This is Cupiennin-3a from Cupiennius salei (American wandering spider).